Consider the following 658-residue polypeptide: Glycine--tRNA ligase beta subunit (658 aa).

It belongs to the class-II aminoacyl-tRNA synthetase family. Tetramer of two alpha and two beta subunits.

The protein resides in the cytoplasm. The enzyme catalyses tRNA(Gly) + glycine + ATP = glycyl-tRNA(Gly) + AMP + diphosphate. The polypeptide is Glycine--tRNA ligase beta subunit (Rickettsia bellii (strain OSU 85-389)).